The chain runs to 468 residues: UDP-N-acetylmuramate--L-alanine ligase (468 aa).

An ATP-binding site is contributed by 121–127; sequence GSHGKTT.

Belongs to the MurCDEF family.

The protein resides in the cytoplasm. It carries out the reaction UDP-N-acetyl-alpha-D-muramate + L-alanine + ATP = UDP-N-acetyl-alpha-D-muramoyl-L-alanine + ADP + phosphate + H(+). It participates in cell wall biogenesis; peptidoglycan biosynthesis. In terms of biological role, cell wall formation. The sequence is that of UDP-N-acetylmuramate--L-alanine ligase from Borreliella burgdorferi (strain ATCC 35210 / DSM 4680 / CIP 102532 / B31) (Borrelia burgdorferi).